The primary structure comprises 214 residues: Large ribosomal subunit protein uL4 (214 aa).

The disordered stretch occupies residues 56 to 86; sequence THKVKNRAEVSGTGKKPWKQKSTGKARAGSK. A compositionally biased stretch (basic residues) spans 71-85; the sequence is KPWKQKSTGKARAGS.

It belongs to the universal ribosomal protein uL4 family. Part of the 50S ribosomal subunit.

In terms of biological role, one of the primary rRNA binding proteins, this protein initially binds near the 5'-end of the 23S rRNA. It is important during the early stages of 50S assembly. It makes multiple contacts with different domains of the 23S rRNA in the assembled 50S subunit and ribosome. Functionally, forms part of the polypeptide exit tunnel. This chain is Large ribosomal subunit protein uL4, found in Mesomycoplasma hyopneumoniae (strain 232) (Mycoplasma hyopneumoniae).